Reading from the N-terminus, the 122-residue chain is Putative syntaxin 6 (122 aa).

Residues M1 to S100 are Cytoplasmic-facing. Positions E31–L93 constitute a t-SNARE coiled-coil homology domain. The helical; Anchor for type IV membrane protein transmembrane segment at S101–L121 threads the bilayer. Position 122 (V122) is a topological domain, extracellular.

This sequence belongs to the syntaxin family.

Its subcellular location is the membrane. Functionally, SNARE promoting movement of transport vesicles to target membranes. Potentially functions in retrograde trafficking and in the endocytic recycling pathway. This chain is Putative syntaxin 6 (syx-6), found in Caenorhabditis elegans.